A 324-amino-acid polypeptide reads, in one-letter code: MSEENVLIGVIGGSGLYQLDNLTVVKTVNPETPWGFPSSPITIAALPSGTKVAFLARHGIGHVIPPSSVPSTANIAALKSLGVSAILSFSAVGSLREEISPGSFALPSQIIDRTKGIRDSSFFNGTSIVAHAMFGDPFSNKLIRWLEPRVRKALEKEGKGKLLFTDKTIVCMEGPQFSTRAESVMYRQWGGDLINMSVLPEAKLAREAELSYALIAMATDYDSWRPHSDAVTAHDVVQTLHDNGASAKLVLSTILDDLHTTINTHHRALTNGNSQDLEAIREEEALLQERGSMKFSIMPASPQQKAEDRKKLAFILPEHFKDAA.

Residues Ser14, 57–58 (RH), and 90–91 (SA) contribute to the phosphate site. Met196 contributes to the substrate binding site. Position 197 (Ser197) interacts with phosphate. 220–222 (DYD) contacts substrate.

The protein belongs to the PNP/MTAP phosphorylase family. MTAP subfamily. In terms of assembly, homotrimer.

The protein resides in the cytoplasm. It is found in the nucleus. The enzyme catalyses S-methyl-5'-thioadenosine + phosphate = 5-(methylsulfanyl)-alpha-D-ribose 1-phosphate + adenine. The protein operates within amino-acid biosynthesis; L-methionine biosynthesis via salvage pathway; S-methyl-5-thio-alpha-D-ribose 1-phosphate from S-methyl-5'-thioadenosine (phosphorylase route): step 1/1. Its function is as follows. Catalyzes the reversible phosphorylation of S-methyl-5'-thioadenosine (MTA) to adenine and 5-methylthioribose-1-phosphate. Involved in the breakdown of MTA, a major by-product of polyamine biosynthesis. Responsible for the first step in the methionine salvage pathway after MTA has been generated from S-adenosylmethionine. Has broad substrate specificity with 6-aminopurine nucleosides as preferred substrates. In Coprinopsis cinerea (strain Okayama-7 / 130 / ATCC MYA-4618 / FGSC 9003) (Inky cap fungus), this protein is S-methyl-5'-thioadenosine phosphorylase.